The primary structure comprises 428 residues: Tol-Pal system protein TolB (428 aa).

Positions 1–23 (MRRLYQTVCTLALLLVGLQAAHA) are cleaved as a signal peptide.

This sequence belongs to the TolB family. As to quaternary structure, the Tol-Pal system is composed of five core proteins: the inner membrane proteins TolA, TolQ and TolR, the periplasmic protein TolB and the outer membrane protein Pal. They form a network linking the inner and outer membranes and the peptidoglycan layer.

It is found in the periplasm. Part of the Tol-Pal system, which plays a role in outer membrane invagination during cell division and is important for maintaining outer membrane integrity. The chain is Tol-Pal system protein TolB from Alkalilimnicola ehrlichii (strain ATCC BAA-1101 / DSM 17681 / MLHE-1).